A 114-amino-acid polypeptide reads, in one-letter code: Small ribosomal subunit protein uS17 (114 aa).

This sequence belongs to the universal ribosomal protein uS17 family. In terms of assembly, part of the 30S ribosomal subunit.

Its function is as follows. One of the primary rRNA binding proteins, it binds specifically to the 5'-end of 16S ribosomal RNA. The protein is Small ribosomal subunit protein uS17 of Aeropyrum pernix (strain ATCC 700893 / DSM 11879 / JCM 9820 / NBRC 100138 / K1).